The sequence spans 243 residues: Triosephosphate isomerase (243 aa).

Residue 9 to 11 (NWK) participates in substrate binding. Catalysis depends on His96, which acts as the Electrophile. The Proton acceptor role is filled by Glu165. Substrate is bound by residues Gly171, Ser204, and 225–226 (GG).

The protein belongs to the triosephosphate isomerase family. As to quaternary structure, homodimer.

It localises to the cytoplasm. The catalysed reaction is D-glyceraldehyde 3-phosphate = dihydroxyacetone phosphate. It participates in carbohydrate biosynthesis; gluconeogenesis. The protein operates within carbohydrate degradation; glycolysis; D-glyceraldehyde 3-phosphate from glycerone phosphate: step 1/1. Its function is as follows. Involved in the gluconeogenesis. Catalyzes stereospecifically the conversion of dihydroxyacetone phosphate (DHAP) to D-glyceraldehyde-3-phosphate (G3P). This is Triosephosphate isomerase from Prochlorococcus marinus (strain SARG / CCMP1375 / SS120).